The sequence spans 328 residues: Gonadotropin-releasing hormone receptor (328 aa).

Over 1 to 38 the chain is Extracellular; sequence MANSASPEQNQNHCSAINNSIPLMQGNLPTLTLSGKIR. The N-linked (GlcNAc...) asparagine glycan is linked to N18. A helical transmembrane segment spans residues 39–58; it reads VTVTFFLFLLSATFNASFLL. The Cytoplasmic segment spans residues 59 to 77; it reads KLQKWTQKKEKGKKLSRMK. Residues 78 to 97 form a helical membrane-spanning segment; that stretch reads LLLKHLTLANLLETLIVMPL. Residues 98-115 lie on the Extracellular side of the membrane; sequence DGMWNITVQWYAGELLCK. N102 is a glycosylation site (N-linked (GlcNAc...) asparagine). C114 and C196 are joined by a disulfide. Residues 116 to 137 traverse the membrane as a helical segment; sequence VLSYLKLFSMYAPAFMMVVISL. The Cytoplasmic segment spans residues 138–164; that stretch reads DRSLAITRPLALKSNSKVGQSMVGLAW. The chain crosses the membrane as a helical span at residues 165–184; it reads ILSSVFAGPQLYIFRMIHLA. Residues 185–212 lie on the Extracellular side of the membrane; the sequence is DSSGQTKVFSQCVTHCSFSQWWHQAFYN. The helical transmembrane segment at 213–232 threads the bilayer; it reads FFTFSCLFIIPLFIMLICNA. The Cytoplasmic portion of the chain corresponds to 233–281; that stretch reads KIIFTLTRVLHQDPHELQLNQSKNNIPRARLKTLKMTVAFATSFTVCWT. Residues 282 to 300 traverse the membrane as a helical segment; it reads PYYVLGIWYWFDPEMLNRL. Over 301–306 the chain is Extracellular; the sequence is SDPVNH. A helical membrane pass occupies residues 307–326; the sequence is FFFLFAFLNPCFDPLIYGYF. Residues 327-328 are Cytoplasmic-facing; the sequence is SL.

It belongs to the G-protein coupled receptor 1 family. Pituitary, ovary, testis, breast and prostate but not in liver and spleen.

It localises to the cell membrane. Receptor for gonadotropin releasing hormone (GnRH) that mediates the action of GnRH to stimulate the secretion of the gonadotropic hormones luteinizing hormone (LH) and follicle-stimulating hormone (FSH). This receptor mediates its action by association with G-proteins that activate a phosphatidylinositol-calcium second messenger system. Isoform 2 may act as an inhibitor of GnRH-R signaling. The polypeptide is Gonadotropin-releasing hormone receptor (GNRHR) (Homo sapiens (Human)).